The following is a 155-amino-acid chain: HTH-type transcriptional repressor MdtR (155 aa).

The HTH marR-type domain occupies 4-140 (ADQLMSDIQL…AAHITAKLAQ (137 aa)). The segment at residues 54-77 (VSEIAERMEVKPSAVTLMADRLEQ) is a DNA-binding region (H-T-H motif).

As to quaternary structure, homodimer.

Its subcellular location is the cytoplasm. Its activity is regulated as follows. The binding of MdtR to the mdtRP promoter region is severely inhibited by adding excess concentrations of fusidic acid or novobiocin but not by actinomycin or streptomycin. Its function is as follows. Repressor of the multidrug resistance operon mdtRP. Acts by binding directly to the mdtRP promoter region, leading to the repression of its expression. The chain is HTH-type transcriptional repressor MdtR from Bacillus subtilis (strain 168).